A 494-amino-acid chain; its full sequence is Alpha-amylase-related protein (494 aa).

Positions 1-20 (MFKFALALTLCLAGASLSLA) are cleaved as a signal peptide. Glutamine 21 bears the Pyrrolidone carboxylic acid mark. The cysteines at positions 48 and 104 are disulfide-linked. The Ca(2+) site is built by asparagine 118, glutamine 169, and aspartate 178. A disulfide bridge links cysteine 157 with cysteine 171. Arginine 206 provides a ligand contact to chloride. The active-site Nucleophile is aspartate 208. Histidine 212 lines the Ca(2+) pocket. Catalysis depends on glutamate 245, which acts as the Proton donor. Chloride is bound by residues asparagine 308 and arginine 343. 3 disulfide bridges follow: cysteine 376-cysteine 382, cysteine 418-cysteine 441, and cysteine 448-cysteine 460.

Belongs to the glycosyl hydrolase 13 family. In terms of assembly, monomer. Ca(2+) serves as cofactor. It depends on chloride as a cofactor.

The protein resides in the secreted. It catalyses the reaction Endohydrolysis of (1-&gt;4)-alpha-D-glucosidic linkages in polysaccharides containing three or more (1-&gt;4)-alpha-linked D-glucose units.. The chain is Alpha-amylase-related protein (Amyrel) from Drosophila dossoui (Fruit fly).